The chain runs to 122 residues: Large ribosomal subunit protein uL14 (122 aa).

Belongs to the universal ribosomal protein uL14 family. In terms of assembly, part of the 50S ribosomal subunit. Forms a cluster with proteins L3 and L19. In the 70S ribosome, L14 and L19 interact and together make contacts with the 16S rRNA in bridges B5 and B8.

Functionally, binds to 23S rRNA. Forms part of two intersubunit bridges in the 70S ribosome. The sequence is that of Large ribosomal subunit protein uL14 from Borreliella burgdorferi (strain ZS7) (Borrelia burgdorferi).